We begin with the raw amino-acid sequence, 636 residues long: C-terminal binding protein AN (636 aa).

The tract at residues 1-21 is disordered; the sequence is MSKIRSSATMPHRDQPSPASP. NAD(+)-binding positions include S91, 147–148, 169–174, D193, 231–237, 258–260, D284, and 307–311; these read WL, VGRSVS, CALTNDT, TGS, and RSADY. The tract at residues 341–489 is disordered; that stretch reads VSDEEVEESE…PLEVMQESSP (149 aa). The segment covering 342 to 357 has biased composition (acidic residues); that stretch reads SDEEVEESEASEEEEQ. The span at 369 to 384 shows a compositional bias: polar residues; that stretch reads ESTSRQQGESTLTSTE. Basic and acidic residues predominate over residues 385 to 395; it reads IVRREASELKE. Residues 398–409 show a composition bias toward polar residues; that stretch reads SPGQQHVSQNTA. Residues 417–429 are compositionally biased toward basic residues; it reads SRSGKKAKKRHSQ. Over residues 430–445 the composition is skewed to polar residues; that stretch reads QKYMQKTDGSSGLNEE. Positions 470–480 are enriched in basic and acidic residues; sequence SPEDSRSRKTP.

The protein belongs to the D-isomer specific 2-hydroxyacid dehydrogenase family. Plant AN subfamily. In terms of assembly, homodimer. Interacts with KCBP and SUB (via intra-cellular domain); AN is not required for the correct subcellular localization and recycling of SUB. Binds to SOKs proteins polymers (e.g. SOK1, SOK2, SOK3 and SOK4). Interacts with IPGA1 on microtubule upon mechanical stress to regulate microtubule organization. It depends on NAD(+) as a cofactor. Expressed in cotyledons, leaves, roots, stems and floral buds.

The protein localises to the cytoplasm. It localises to the golgi apparatus. Its subcellular location is the trans-Golgi network. The protein resides in the cytoskeleton. Its function is as follows. Involved in controlling the equilibrium between tubular and stacked structures in the Golgi complex. Required for cortical microtubules (MTs) arrangement that confers cell shape. Cooperatively with IPGA1, negatively regulates cortical microtubules (CMTs) organization in response to mechanical stress and modulates pavement cells morphogenesis leading to puzzle shape, probably in an AAA1/KTN1-dependent manner. Regulates the width of leaves by controlling the polar elongation of leaf cells. Involved in the regulation of trichome branching. Seems to not be able to regulate gene transcription. Regulates epidermal cell divisions and elongation in a non-cell-autonomous manner (regulated by subepidermal cells), but regulates epidermal cell polarity, shape, trichome branching and elongation in a cell-autonomous manner. Negatively regulates growth in the petiole elongation. Prevents lipid peroxidation as a result of abiotic stress response. Is involved in the SUB-dependent signaling mechanism and may act in a membrane trafficking event around the trans-Golgi network. In Arabidopsis thaliana (Mouse-ear cress), this protein is C-terminal binding protein AN.